An 85-amino-acid polypeptide reads, in one-letter code: Protein RALF-like 28 (85 aa).

The signal sequence occupies residues Met-1–Ala-31. Cystine bridges form between Cys-48-Cys-53 and Cys-66-Cys-72. Residues Asn-60–Ile-85 are disordered. The segment covering Pro-75–Ile-85 has biased composition (pro residues).

Belongs to the plant rapid alkalinization factor (RALF) family.

The protein localises to the secreted. Functionally, cell signaling peptide that may regulate plant stress, growth, and development. Mediates a rapid alkalinization of extracellular space by mediating a transient increase in the cytoplasmic Ca(2+) concentration leading to a calcium-dependent signaling events through a cell surface receptor and a concomitant activation of some intracellular mitogen-activated protein kinases. This chain is Protein RALF-like 28 (RALFL28), found in Arabidopsis thaliana (Mouse-ear cress).